Consider the following 2873-residue polypeptide: Fibrillin-1 (2873 aa).

An N-terminal signal peptide occupies residues 1-24; that stretch reads MRRGGLLEVALAFALLLESYTSHG. The propeptide occupies 25–44; it reads ADANLEAGSLKETRANRAKR. The fibrillin unique N-terminal (FUN) domain stretch occupies residues 45–81; that stretch reads RGGGGHDALKGPNVCGSRYNAYCCPGWKTLPGGNQCI. Positions 45–452 are N-terminal domain; the sequence is RGGGGHDALK…PPRVLPFNVT (408 aa). 11 disulfide bridges follow: cysteine 59/cysteine 68, cysteine 67/cysteine 80, cysteine 85/cysteine 94, cysteine 89/cysteine 100, cysteine 102/cysteine 111, cysteine 119/cysteine 129, cysteine 123/cysteine 134, cysteine 136/cysteine 145, cysteine 150/cysteine 160, cysteine 154/cysteine 166, and cysteine 168/cysteine 177. EGF-like domains are found at residues 81–112, 115–146, and 147–178; these read IVPI…PSCG, SIQH…THCG, and QPVC…PQCE. The interval 119-329 is interaction with MFAP4; that stretch reads CSIRCMNGGS…YTSPDGTRCV (211 aa). Residues 184–236 form the TB 1 domain; the sequence is GPCFTVVSNQMCQGQLSGIVCTKTLCCATVGRAWGHPCEMCPAQPHPCRRGFI. Positions 195-221 are hybrid domain 1; the sequence is CQGQLSGIVCTKTLCCATVGRAWGHPC. The 42-residue stretch at 246–287 folds into the EGF-like 4; calcium-binding domain; the sequence is DVDECQAIPGMCQGGNCINTVGSFECKCPAGHKFNEVSQKCE. Intrachain disulfides connect cysteine 250–cysteine 262, cysteine 257–cysteine 271, cysteine 273–cysteine 286, cysteine 292–cysteine 304, cysteine 299–cysteine 313, and cysteine 315–cysteine 328. Serine 268 is a glycosylation site (O-linked (Glc) serine). One can recognise an EGF-like 5; calcium-binding domain in the interval 288–329; sequence DIDECSTIPGVCDGGECTNTVSSYFCKCPPGFYTSPDGTRCV. In terms of domain architecture, TB 2 spans 334–389; sequence GYCYTALANGRCSNQLPQSITKMQCCCDLGRCWSPGVTVAPEMCPIRSTEDFNKLC. Residue asparagine 450 is glycosylated (N-linked (GlcNAc...) asparagine). Residues 451–491 enclose the EGF-like 6 domain; that stretch reads VTDYCQLVRYLCQNGRCIPTPGSYRCECNKGFQLDIRGECI. Intrachain disulfides connect cysteine 455–cysteine 467, cysteine 462–cysteine 476, cysteine 478–cysteine 490, cysteine 496–cysteine 506, cysteine 501–cysteine 515, cysteine 517–cysteine 530, cysteine 536–cysteine 548, cysteine 543–cysteine 557, cysteine 559–cysteine 572, cysteine 578–cysteine 589, cysteine 584–cysteine 598, cysteine 600–cysteine 613, cysteine 619–cysteine 630, cysteine 625–cysteine 639, and cysteine 641–cysteine 654. An O-linked (Glc) serine glycan is attached at serine 473. The 40-residue stretch at 492–531 folds into the EGF-like 7; calcium-binding domain; sequence DVDECEKNPCTGGECINNQGSYTCHCRAGYQSTLTRTECR. Serine 512 carries an O-linked (Glc) serine glycan. Residues 532 to 573 form the EGF-like 8; calcium-binding domain; it reads DIDECLQNGRICNNGRCINTDGSFHCVCNAGFHVTRDGKNCE. The region spanning 574-614 is the EGF-like 9; calcium-binding domain; it reads DMDECSIRNMCLNGMCINEDGSFKCICKPGFQLASDGRYCK. Residues 615-655 enclose the EGF-like 10; calcium-binding domain; it reads DINECETPGICMNGRCVNTDGSYRCECFPGLAVGLDGRVCV. Residues 661–713 form the TB 3 domain; the sequence is STCYGGYRRGQCVKPLFGAVTKSECCCASTEYAFGEPCQPCPAQNSAEYQALC. Residues 725-766 enclose the EGF-like 11; calcium-binding domain; the sequence is DINECALDPDICPNGICENLRGTYKCICNSGYEVDITGKNCV. 16 cysteine pairs are disulfide-bonded: cysteine 729-cysteine 741, cysteine 736-cysteine 750, cysteine 752-cysteine 765, cysteine 771-cysteine 783, cysteine 778-cysteine 792, cysteine 794-cysteine 807, cysteine 813-cysteine 823, cysteine 818-cysteine 832, cysteine 834-cysteine 847, cysteine 855-cysteine 877, cysteine 864-cysteine 889, cysteine 878-cysteine 892, cysteine 898-cysteine 910, cysteine 916-cysteine 928, cysteine 923-cysteine 937, and cysteine 939-cysteine 952. The EGF-like 12; calcium-binding domain occupies 767–808; sequence DINECVLNSLLCDNGQCRNTPGSFVCTCPKGFVYKPDLKTCE. Positions 809 to 848 constitute an EGF-like 13; calcium-binding domain; the sequence is DIDECESSPCINGVCKNSPGSFICECSPESTLDPTKTICI. In terms of domain architecture, TB 4 spans 853–904; it reads GTCWQTVIDGRCEININGATLKSECCSSLGAAWGSPCTICQLDPICGKGFSR. Residues 862–887 are hybrid domain 2; that stretch reads GRCEININGATLKSECCSSLGAAWGS. In terms of domain architecture, EGF-like 14; calcium-binding spans 912 to 953; that stretch reads DINECEVFPGVCKNGLCVNSRGSFKCECPNGMTLDATGRICL. The TB 5 domain maps to 958–1010; that stretch reads ETCFLKYDDEECTLPIAGRHRMDACCCSVGAAWGTEECEECPLRNSREYEELC. The 42-residue stretch at 1030 to 1071 folds into the EGF-like 15; calcium-binding domain; sequence DINECKMIPSLCTHGKCRNTIGSFKCRCDSGFALDSEERNCT. Cystine bridges form between cysteine 1034/cysteine 1046, cysteine 1041/cysteine 1055, cysteine 1057/cysteine 1070, cysteine 1076/cysteine 1088, cysteine 1083/cysteine 1097, cysteine 1099/cysteine 1113, cysteine 1119/cysteine 1131, cysteine 1126/cysteine 1140, cysteine 1142/cysteine 1155, cysteine 1161/cysteine 1173, cysteine 1168/cysteine 1182, cysteine 1184/cysteine 1197, cysteine 1203/cysteine 1214, cysteine 1210/cysteine 1223, cysteine 1225/cysteine 1238, cysteine 1244/cysteine 1256, cysteine 1251/cysteine 1265, cysteine 1267/cysteine 1280, cysteine 1286/cysteine 1298, cysteine 1293/cysteine 1307, cysteine 1309/cysteine 1322, cysteine 1328/cysteine 1341, cysteine 1335/cysteine 1350, cysteine 1352/cysteine 1363, cysteine 1369/cysteine 1382, cysteine 1376/cysteine 1391, cysteine 1393/cysteine 1404, cysteine 1410/cysteine 1422, cysteine 1417/cysteine 1431, cysteine 1433/cysteine 1446, cysteine 1452/cysteine 1463, cysteine 1458/cysteine 1472, cysteine 1474/cysteine 1487, cysteine 1493/cysteine 1504, cysteine 1499/cysteine 1513, cysteine 1515/cysteine 1528, cysteine 1536/cysteine 1564, cysteine 1551/cysteine 1576, cysteine 1565/cysteine 1579, cysteine 1566/cysteine 1591, cysteine 1612/cysteine 1624, cysteine 1619/cysteine 1633, cysteine 1635/cysteine 1648, cysteine 1654/cysteine 1665, cysteine 1660/cysteine 1674, and cysteine 1676/cysteine 1689. The N-linked (GlcNAc...) asparagine glycan is linked to asparagine 1069. Residues 1072-1114 enclose the EGF-like 16; calcium-binding domain; it reads DIDECRISPDLCGRGQCVNTPGDFECKCDEGYESGFMMMKNCM. Positions 1115–1156 constitute an EGF-like 17; calcium-binding domain; that stretch reads DIDECQRDPLLCRGGICHNTEGSYRCECPPGHQLSPNISACI. Residue serine 1137 is glycosylated (O-linked (Glc) serine). Residue asparagine 1151 is glycosylated (N-linked (GlcNAc...) asparagine). In terms of domain architecture, EGF-like 18; calcium-binding spans 1157–1198; the sequence is DINECELSANLCPHGRCVNLIGKYQCACNPGYHPTHDRLFCV. The EGF-like 19; calcium-binding domain maps to 1199–1239; the sequence is DIDECSIMNGGCETFCTNSDGSYECSCQPGFALMPDQRSCT. A glycan (O-linked (Glc) serine) is linked at serine 1220. The EGF-like 20; calcium-binding domain occupies 1240 to 1281; it reads DIDECEDNPNICDGGQCTNIPGEYRCLCYDGFMASEDMKTCV. Residues 1282 to 1323 form the EGF-like 21; calcium-binding domain; sequence DVNECDLNPNICLSGTCENTKGSFICHCDMGYSGKKGKTGCT. Residue serine 1304 is glycosylated (O-linked (Glc) serine). An EGF-like 22; calcium-binding domain is found at 1324-1364; that stretch reads DINECEIGAHNCGRHAVCTNTAGSFKCSCSPGWIGDGIKCT. A glycan (O-linked (Glc) serine) is linked at serine 1347. Positions 1365–1405 constitute an EGF-like 23; calcium-binding domain; the sequence is DLDECSNGTHMCSQHADCKNTMGSYRCLCKDGYTGDGFTCT. The N-linked (GlcNAc...) asparagine glycan is linked to asparagine 1371. An O-linked (Glc) serine glycan is attached at serine 1388. Residues 1406–1447 form the EGF-like 24; calcium-binding domain; it reads DLDECSENLNLCGNGQCLNAPGGYRCECDMGFVPSADGKACE. The EGF-like 25; calcium-binding domain maps to 1448 to 1488; that stretch reads DIDECSLPNICVFGTCHNLPGLFRCECEIGYELDRSGGNCT. An N-linked (GlcNAc...) asparagine glycan is attached at asparagine 1486. Residues 1489–1529 form the EGF-like 26; calcium-binding domain; the sequence is DVNECLDPTTCISGNCVNTPGSYTCDCPPDFELNPTRVGCV. O-linked (Glc) serine glycosylation occurs at serine 1510. The tract at residues 1530-2733 is C-terminal domain; it reads DTRSGNCYLD…GYPKRGRKRR (1204 aa). One can recognise a TB 6 domain in the interval 1534–1591; it reads GNCYLDIRPRGDNGDTACSNEIGVGVSKASCCCSLGKAWGTPCELCPSVNTSEYKILC. The short motif at 1543-1545 is the Cell attachment site element; sequence RGD. Residue asparagine 1583 is glycosylated (N-linked (GlcNAc...) asparagine). The region spanning 1608–1649 is the EGF-like 27; calcium-binding domain; sequence DIDECQELPGLCQGGKCINTFGSFQCRCPTGYYLNEDTRVCD. The O-linked (Glc) serine glycan is linked to serine 1630. In terms of domain architecture, EGF-like 28; calcium-binding spans 1650-1690; the sequence is DVNECETPGICGPGTCYNTVGNYTCICPPDYMQVNGGNNCM. Residue asparagine 1671 is glycosylated (N-linked (GlcNAc...) asparagine). Residues 1695-1750 form the TB 7 domain; sequence SLCYRNYYADNQTCDGELLFNMTKKMCCCSYNIGRAWNKPCEQCPIPSTDEFATLC. N-linked (GlcNAc...) asparagine glycosylation is found at asparagine 1705 and asparagine 1715. Residues 1768–1809 enclose the EGF-like 29; calcium-binding domain; sequence DIDECREIPGVCENGVCINMVGSFRCECPVGFFYNDKLLVCE. Cystine bridges form between cysteine 1772-cysteine 1784, cysteine 1779-cysteine 1793, cysteine 1795-cysteine 1808, cysteine 1814-cysteine 1826, cysteine 1820-cysteine 1835, cysteine 1837-cysteine 1849, cysteine 1855-cysteine 1867, cysteine 1862-cysteine 1876, cysteine 1878-cysteine 1891, cysteine 1897-cysteine 1907, cysteine 1902-cysteine 1916, cysteine 1918-cysteine 1930, cysteine 1936-cysteine 1949, cysteine 1944-cysteine 1958, cysteine 1960-cysteine 1973, cysteine 1979-cysteine 1991, cysteine 1986-cysteine 2000, cysteine 2002-cysteine 2013, cysteine 2019-cysteine 2031, cysteine 2026-cysteine 2040, cysteine 2042-cysteine 2055, cysteine 2063-cysteine 2085, cysteine 2072-cysteine 2098, cysteine 2086-cysteine 2101, cysteine 2087-cysteine 2113, cysteine 2133-cysteine 2144, cysteine 2139-cysteine 2153, cysteine 2155-cysteine 2166, cysteine 2172-cysteine 2183, cysteine 2178-cysteine 2192, cysteine 2194-cysteine 2206, cysteine 2212-cysteine 2223, cysteine 2219-cysteine 2232, cysteine 2234-cysteine 2247, cysteine 2253-cysteine 2267, cysteine 2260-cysteine 2276, cysteine 2278-cysteine 2291, cysteine 2297-cysteine 2309, cysteine 2304-cysteine 2318, and cysteine 2320-cysteine 2333. In terms of domain architecture, EGF-like 30; calcium-binding spans 1810–1850; it reads DIDECQNGPVCQRNAECINTAGSYRCDCKPGYRLTSTGQCN. Serine 1832 carries an O-linked (Glc) serine glycan. The EGF-like 31; calcium-binding domain maps to 1851–1892; sequence DRNECQEIPNICSHGQCIDTVGSFYCLCHTGFKTNVDQTMCL. Serine 1873 is a glycosylation site (O-linked (Glc) serine). Positions 1893-1931 constitute an EGF-like 32; calcium-binding domain; that stretch reads DINECERDACGNGTCRNTIGSFNCRCNHGFILSHNNDCI. Asparagine 1904 carries N-linked (GlcNAc...) asparagine glycosylation. An O-linked (Glc) serine glycan is attached at serine 1913. Residues 1932-1974 form the EGF-like 33; calcium-binding domain; that stretch reads DVDECATGNGNLCRNGQCVNTVGSFQCRCNEGYEVAPDGRTCV. Serine 1955 carries O-linked (Glc) serine glycosylation. The region spanning 1975-2014 is the EGF-like 34; calcium-binding domain; that stretch reads DINECVLDPGKCAPGTCQNLDGSYRCICPPGYSLQNDKCE. Residues 2015–2056 enclose the EGF-like 35; calcium-binding domain; it reads DIDECVEEPEICALGTCSNTEGSFKCLCPEGFSLSSTGRRCQ. Serine 2037 carries O-linked (Glc) serine glycosylation. Residues 2061–2113 enclose the TB 8 domain; sequence SYCYAKFEGGKCSSPKSRNHSKQECCCALKGEGWGDPCELCPTEPDEAFRQIC. An N-linked (GlcNAc...) asparagine glycan is attached at asparagine 2079. Residues 2129–2167 form the EGF-like 36; calcium-binding domain; the sequence is DMDECKEPDVCRHGQCINTDGSYRCECPFGYILEGNECV. O-linked (Glc) serine glycosylation is present at serine 2150. Residues 2168-2207 form the EGF-like 37; calcium-binding domain; sequence DTDECSVGNPCGNGTCKNVIGGFECTCEEGFEPGPMMTCE. Asparagine 2180 is a glycosylation site (N-linked (GlcNAc...) asparagine). The EGF-like 38; calcium-binding domain occupies 2208 to 2248; it reads DINECAQNPLLCAFRCVNTYGSYECKCPVGYVLREDRRMCK. Serine 2229 carries an O-linked (Glc) serine glycan. Residues 2249–2292 enclose the EGF-like 39; calcium-binding domain; it reads DEDECAEGKHDCTEKQMECKNLIGTYMCICGPGYQRRPDGEGCI. In terms of domain architecture, EGF-like 40; calcium-binding spans 2293-2334; sequence DENECQTKPGICENGRCLNTLGSYTCECNDGFTASPTQDECL. Serine 2315 is a glycosylation site (O-linked (Glc) serine). The TB 9 domain maps to 2339-2392; that stretch reads GYCFSEVLQNMCQIGSSNRNPVTKSECCCDGGRGWGPHCEICPFEGTVAYKKLC. An EGF-like 41; calcium-binding domain is found at 2404–2445; the sequence is DIDECKVIHDVCRNGECVNDRGSYHCICKTGYTPDITGTACV. Cystine bridges form between cysteine 2408–cysteine 2420, cysteine 2415–cysteine 2429, cysteine 2431–cysteine 2444, cysteine 2450–cysteine 2461, cysteine 2457–cysteine 2470, cysteine 2472–cysteine 2485, cysteine 2491–cysteine 2502, cysteine 2498–cysteine 2511, cysteine 2513–cysteine 2524, cysteine 2530–cysteine 2543, cysteine 2537–cysteine 2552, cysteine 2554–cysteine 2567, cysteine 2573–cysteine 2583, cysteine 2579–cysteine 2592, cysteine 2594–cysteine 2607, cysteine 2613–cysteine 2624, cysteine 2619–cysteine 2633, cysteine 2635–cysteine 2648, cysteine 2654–cysteine 2665, cysteine 2661–cysteine 2674, and cysteine 2676–cysteine 2688. Positions 2446–2486 constitute an EGF-like 42; calcium-binding domain; it reads DLNECNQAPKPCNFICKNTEGSYQCSCPKGYILQEDGRSCK. Serine 2467 is a glycosylation site (O-linked (Glc) serine). The region spanning 2487–2525 is the EGF-like 43; calcium-binding domain; that stretch reads DLDECATKQHNCQFLCVNTIGGFTCKCPPGFTQHHTACI. One can recognise an EGF-like 44; calcium-binding domain in the interval 2526–2568; the sequence is DNNECTSDINLCGSKGVCQNTPGSFTCECQRGFSLDQSGASCE. Serine 2549 is a glycosylation site (O-linked (Glc) serine). The EGF-like 45; calcium-binding domain maps to 2569 to 2608; the sequence is DVDECEGNHRCQHGCQNIIGGYRCSCPQGYLQHYQWNQCV. An EGF-like 46; calcium-binding domain is found at 2609–2649; that stretch reads DENECLSAHVCGGASCHNTLGSYKCMCPTGFQYEQFSGGCQ. An O-linked (Glc) serine glycan is attached at serine 2630. An EGF-like 47; calcium-binding domain is found at 2650–2689; it reads DINECGSSQAPCSYGCSNTEGGYLCGCPPGYFRIGQGHCV. Residues serine 2704, serine 2705, and serine 2711 each carry the phosphoserine modification. Positions 2728 to 2747 are disordered; the sequence is RGRKRRSTNETDASDIQDGS. N-linked (GlcNAc...) asparagine glycans are attached at residues asparagine 2736, asparagine 2752, and asparagine 2769.

The protein belongs to the fibrillin family. As to quaternary structure, interacts with COL16A1. Interacts with integrin alpha-V/beta-3. Interacts with ADAMTS10; this interaction promotes microfibril assembly. Interacts with THSD4; this interaction promotes fibril formation. Interacts (via N-terminal domain) with FBLN2 and FBLN5. Interacts with ELN. Forms a ternary complex with ELN and FBLN2 or FBLN5 and a significant interaction with ELN seen only in the presence of FBLN2 or FBLN5. Interacts (via N-terminal domain) with LTBP2 (via C-terminal domain) in a Ca(+2)-dependent manner. Interacts (via N-terminal domain) with LTBP1 (via C-terminal domain). Interacts with integrins ITGA5:ITGB1, ITGAV:ITGB3 and ITGAV:ITGB6. Interacts (via N-terminal domain) with BMP2, BMP4, BMP7, BMP10 and GDF5. Interacts (via N-terminal domain) with MFAP2 and MFAP5. Interacts with ADAMTSL5. Interacts with MFAP4. Interacts (via N-terminal domain) with TNFSF11 in a Ca(+2)-dependent manner. Interacts (via N-terminal domain) with EFEMP2; this interaction inhibits EFEMP2 binding to LOX and ELN. Cleavage of N- and C-terminus by furin is required for incorporation into the extracellular matrix and assembly into microfibrils. The C-terminus, which corresponds to the Asprosin chain, was initially thought to constitute a propeptide. Fibrillin-1 and Asprosin chains are still linked together during the secretion from cells, but are subsequently separated by furin, an essential step for incorporation of Fibrillin-1 into the nascent microfibrils. Post-translationally, forms intermolecular disulfide bonds either with other fibrillin-1 molecules or with other components of the microfibrils. In terms of processing, O-glycosylated on serine residues by POGLUT2 and POGLUT3 which is necessary for efficient protein secretion. Strongly expressed during the first week of osteoblast differentiation. As to expression, secreted by white adipose tissue (at protein level).

The protein resides in the secreted. It is found in the extracellular space. The protein localises to the extracellular matrix. In terms of biological role, structural component of the 10-12 nm diameter microfibrils of the extracellular matrix, which conveys both structural and regulatory properties to load-bearing connective tissues. Fibrillin-1-containing microfibrils provide long-term force bearing structural support. In tissues such as the lung, blood vessels and skin, microfibrils form the periphery of the elastic fiber, acting as a scaffold for the deposition of elastin. In addition, microfibrils can occur as elastin-independent networks in tissues such as the ciliary zonule, tendon, cornea and glomerulus where they provide tensile strength and have anchoring roles. Fibrillin-1 also plays a key role in tissue homeostasis through specific interactions with growth factors, such as the bone morphogenetic proteins (BMPs), growth and differentiation factors (GDFs) and latent transforming growth factor-beta-binding proteins (LTBPs), cell-surface integrins and other extracellular matrix protein and proteoglycan components. Regulates osteoblast maturation by controlling TGF-beta bioavailability and calibrating TGF-beta and BMP levels, respectively. Negatively regulates osteoclastogenesis by binding and sequestering an osteoclast differentiation and activation factor TNFSF11. This leads to disruption of TNFSF11-induced Ca(2+) signaling and impairment of TNFSF11-mediated nuclear translocation and activation of transcription factor NFATC1 which regulates genes important for osteoclast differentiation and function. Mediates cell adhesion via its binding to cell surface receptors integrins ITGAV:ITGB3 and ITGA5:ITGB1. Binds heparin and this interaction plays an important role in the assembly of microfibrils. Its function is as follows. Adipokine secreted by white adipose tissue that plays an important regulatory role in the glucose metabolism of liver, muscle and pancreas. Hormone that targets the liver in response to fasting to increase plasma glucose levels. Binds the olfactory receptor Olfr734 at the surface of hepatocytes and promotes hepatocyte glucose release by activating the protein kinase A activity in the liver, resulting in rapid glucose release into the circulation. May act as a regulator of adaptive thermogenesis by inhibiting browning and energy consumption, while increasing lipid deposition in white adipose tissue. Also acts as an orexigenic hormone that increases appetite: crosses the blood brain barrier and exerts effects on the hypothalamus. In the arcuate nucleus of the hypothalamus, asprosin directly activates orexigenic AgRP neurons and indirectly inhibits anorexigenic POMC neurons, resulting in appetite stimulation. Activates orexigenic AgRP neurons via binding to the olfactory receptor Olfr734. May also play a role in sperm motility in testis via interaction with Olfr734 receptor. This chain is Fibrillin-1, found in Mus musculus (Mouse).